The following is a 215-amino-acid chain: Large ribosomal subunit protein uL16 (215 aa).

This sequence belongs to the universal ribosomal protein uL16 family. Component of the large ribosomal subunit.

It is found in the cytoplasm. Functionally, component of the large ribosomal subunit. Plays a role in the formation of actively translating ribosomes. Plays a role in the embryonic brain development. This is Large ribosomal subunit protein uL16 from Danio rerio (Zebrafish).